Reading from the N-terminus, the 505-residue chain is Deoxyguanosinetriphosphate triphosphohydrolase (505 aa).

Residues arginine 66 to cysteine 273 form the HD domain.

This sequence belongs to the dGTPase family. Type 1 subfamily. Homotetramer. Mg(2+) serves as cofactor.

The catalysed reaction is dGTP + H2O = 2'-deoxyguanosine + triphosphate + H(+). Its function is as follows. dGTPase preferentially hydrolyzes dGTP over the other canonical NTPs. The protein is Deoxyguanosinetriphosphate triphosphohydrolase of Escherichia coli O17:K52:H18 (strain UMN026 / ExPEC).